Here is a 103-residue protein sequence, read N- to C-terminus: Histone H4 (103 aa).

Positions 1-14 (MSGRGKGGKGLGKG) are enriched in gly residues. A disordered region spans residues 1–20 (MSGRGKGGKGLGKGGAKRHR). Residue serine 2 is modified to N-acetylserine. Lysine 17 carries the post-translational modification N6-acetyllysine. The DNA-binding element occupies 17–21 (KRHRR). Lysine 80 carries the post-translational modification N6-methylated lysine.

It belongs to the histone H4 family. The nucleosome is a histone octamer containing two molecules each of H2A, H2B, H3 and H4 assembled in one H3-H4 heterotetramer and two H2A-H2B heterodimers. The octamer wraps approximately 147 bp of DNA.

It localises to the nucleus. It is found in the chromosome. In terms of biological role, core component of nucleosome. Nucleosomes wrap and compact DNA into chromatin, limiting DNA accessibility to the cellular machineries which require DNA as a template. Histones thereby play a central role in transcription regulation, DNA repair, DNA replication and chromosomal stability. DNA accessibility is regulated via a complex set of post-translational modifications of histones, also called histone code, and nucleosome remodeling. This Olisthodiscus luteus (Marine phytoflagellate) protein is Histone H4.